The sequence spans 20 residues: SAEVAGAVIEGAKLTFNVLQ.

Belongs to the actinoporin family. Sea anemone subfamily. Octamer or nonamer in membranes. Monomer in the soluble state.

The protein localises to the secreted. It is found in the nematocyst. The protein resides in the target cell membrane. Functionally, pore-forming toxin (PFT) that consists of a crown-shaped octamer or nonamer that forms cation-selective hydrophilic pores of about 1.5 nm (inside) and 13 nm (outside) and causes cytolysis. It causes cardiac stimulation. Also causes hemolysis (HC(50)=0.4 nM). Interestingly, the Phe-16 is crucial for hemolysis. Pore formation is a multi-step process that involves specific recognition of membrane sphingomyelin (but neither cholesterol nor phosphatidylcholine) using aromatic rich region and adjacent phosphocholine (POC) binding site, firm binding to the membrane (mainly driven by hydrophobic interactions) accompanied by the transfer of the N-terminal region to the lipid-water interface and finally pore formation after oligomerization of monomers. It is probable that a dimeric form is an assembly intermediate before the complete oligomerization. The formation of stable pores occurs only in vesicles composed of DOPC/SM (there is no oligomerization when the PFT is treated with vesicles of DOPC or SM alone). The transmembrane pore displays 8 lateral perforations, one at each subunit-subunit interface, partially occupied by the acyl-chain region of a bridging lipid. Each pore contains 24 lipid molecules, firmly bound to each subunit, that is, 3 lipids (L1, L2, L3, L4 and/or L5) are associated to each subunit. Lipid L1 bridges 2 subunits, whereas lipids L2 and L3 bind to sites at single subunit. In Actinia fragacea (Strawberry anemone), this protein is DELTA-actitoxin-Afr1b.